A 219-amino-acid polypeptide reads, in one-letter code: RPA-interacting protein (219 aa).

Position 18 is a phosphoserine (serine 18). The segment at 137–212 adopts an RIP-type zinc-finger fold; that stretch reads CPVCIKYNLR…PSLLMNCLTC (76 aa). Residues 164 to 180 are mediates nuclear export; it reads STDLTEQKLRACLEENV.

Interacts with the RPA1 subunit of RPA complex. In terms of processing, sumoylated; required for localization in the nuclear PML body and transport of RPA complex in PML body. Upon UV irradiation and during S phase, it is desumoylated, releasing RPA complex that is translocated to sites of DNA damage. Sumoylation takes place at different Lys residues.

Its subcellular location is the nucleus. Mediates the import of RPA complex into the nucleus, possibly via some interaction with importin beta. Sumoylation mediates the localization of RPA complex into the PML body of the nucleus, thereby participating in RPA function in DNA metabolism. This Mus musculus (Mouse) protein is RPA-interacting protein (Rpain).